Reading from the N-terminus, the 126-residue chain is Prefoldin subunit beta (126 aa).

Belongs to the prefoldin subunit beta family. Heterohexamer of two alpha and four beta subunits.

The protein resides in the cytoplasm. Molecular chaperone capable of stabilizing a range of proteins. Seems to fulfill an ATP-independent, HSP70-like function in archaeal de novo protein folding. In Pyrobaculum neutrophilum (strain DSM 2338 / JCM 9278 / NBRC 100436 / V24Sta) (Thermoproteus neutrophilus), this protein is Prefoldin subunit beta.